We begin with the raw amino-acid sequence, 162 residues long: Protein-export protein SecB (162 aa).

The protein belongs to the SecB family. Homotetramer, a dimer of dimers. One homotetramer interacts with 1 SecA dimer.

The protein localises to the cytoplasm. One of the proteins required for the normal export of preproteins out of the cell cytoplasm. It is a molecular chaperone that binds to a subset of precursor proteins, maintaining them in a translocation-competent state. It also specifically binds to its receptor SecA. This is Protein-export protein SecB from Pseudomonas syringae pv. syringae (strain B728a).